The following is a 133-amino-acid chain: Small ribosomal subunit protein eS24z (133 aa).

The interval 104–133 (KSRKQIKERKNRAKKIRGVKKTKAGDAKKK) is disordered. The segment covering 109-125 (IKERKNRAKKIRGVKKT) has biased composition (basic residues).

Belongs to the eukaryotic ribosomal protein eS24 family.

This chain is Small ribosomal subunit protein eS24z (RPS24A), found in Arabidopsis thaliana (Mouse-ear cress).